The chain runs to 251 residues: Probable transcriptional regulatory protein Franean1_5147 (251 aa).

This sequence belongs to the TACO1 family.

The protein resides in the cytoplasm. This Parafrankia sp. (strain EAN1pec) protein is Probable transcriptional regulatory protein Franean1_5147.